We begin with the raw amino-acid sequence, 496 residues long: L-arabinose isomerase (496 aa).

Positions 306, 331, 348, and 447 each coordinate Mn(2+).

This sequence belongs to the arabinose isomerase family. In terms of assembly, homotetramer. Mn(2+) serves as cofactor.

It catalyses the reaction beta-L-arabinopyranose = L-ribulose. The protein operates within carbohydrate degradation; L-arabinose degradation via L-ribulose; D-xylulose 5-phosphate from L-arabinose (bacterial route): step 1/3. With respect to regulation, inhibited by copper. In terms of biological role, catalyzes the conversion of L-arabinose to L-ribulose. In vitro, converts D-galactose into D-tagatose. In Geobacillus stearothermophilus (Bacillus stearothermophilus), this protein is L-arabinose isomerase (araA).